The sequence spans 147 residues: Ribonuclease H (147 aa).

The 142-residue stretch at 1-142 folds into the RNase H type-1 domain; that stretch reads MKKVSIYTDG…CDKLATDEIK (142 aa). Positions 9, 47, 69, and 134 each coordinate Mg(2+).

This sequence belongs to the RNase H family. In terms of assembly, monomer. Mg(2+) is required as a cofactor.

It localises to the cytoplasm. It carries out the reaction Endonucleolytic cleavage to 5'-phosphomonoester.. Functionally, endonuclease that specifically degrades the RNA of RNA-DNA hybrids. This is Ribonuclease H from Acetivibrio thermocellus (strain ATCC 27405 / DSM 1237 / JCM 9322 / NBRC 103400 / NCIMB 10682 / NRRL B-4536 / VPI 7372) (Clostridium thermocellum).